A 931-amino-acid chain; its full sequence is Neuropilin-2 (931 aa).

The first 20 residues, 1–20 (MDMFPLTWVFLALYFSGHEV), serve as a signal peptide directing secretion. Residues 21-864 (RSQQDPPCGG…EKSWLYTLDP (844 aa)) lie on the Extracellular side of the membrane. Disulfide bonds link Cys28–Cys55, Cys83–Cys105, and Cys149–Cys175. CUB domains follow at residues 28 to 142 (CGGR…YEIF) and 149 to 267 (CSKN…YYLI). 2 N-linked (GlcNAc...) asparagine glycosylation sites follow: Asn152 and Asn157. Ca(2+) contacts are provided by Glu197, Asp211, and Asp252. Cys208 and Cys230 are oxidised to a cystine. 2 disulfides stabilise this stretch: Cys277-Cys427 and Cys434-Cys592. 2 F5/8 type C domains span residues 277-427 (CNVP…LFGC) and 434-592 (CSNM…VLGC). Positions 298–310 (TFSDGRWTPQQSR) are enriched in polar residues. Residues 298 to 317 (TFSDGRWTPQQSRLHGDDNG) are disordered. A disordered region spans residues 601 to 621 (VETLGPTVKSEETTTPYPMDE). Asn629 is a glycosylation site (N-linked (GlcNAc...) asparagine). Residues 642 to 802 (SGFNCNFDFP…TDVPLENCME (161 aa)) form the MAM domain. Residues 819 to 854 (THGGEGYEDEIDDEYEGDWSNSSSSTSGAGDPSSGK) form a disordered region. Residues 824 to 835 (GYEDEIDDEYEG) show a composition bias toward acidic residues. Residues 836 to 851 (DWSNSSSSTSGAGDPS) show a composition bias toward low complexity. Asn839 carries N-linked (GlcNAc...) asparagine glycosylation. Residues 865-889 (ILITIIAMSSLGVLLGATCAGLLLY) form a helical membrane-spanning segment. The Cytoplasmic portion of the chain corresponds to 890-931 (CTCSYSGLSSRSCTTLENYNFELYDGLKHKVKINHQKCCSEA).

Belongs to the neuropilin family. Heterodimer with NRP1. Binds PLXNB1. Expressed in developing CNS, PNS and in some nonneural tissues including limb buds, developing bones, muscles, intestinal epithelium, kidney, lung and submandibular gland.

It localises to the membrane. In terms of biological role, high affinity receptor for semaphorins 3C, 3F, VEGF-165 and VEGF-145 isoforms of VEGF, and the PLGF-2 isoform of PGF. In Mus musculus (Mouse), this protein is Neuropilin-2 (Nrp2).